Here is a 268-residue protein sequence, read N- to C-terminus: E3 ubiquitin-protein ligase IAP-3 (268 aa).

BIR repeat units follow at residues 18 to 84 and 111 to 178; these read KAAR…CPFV and EAAR…CEYV. Cysteine 148, cysteine 151, histidine 168, and cysteine 175 together coordinate Zn(2+). Residues 221–256 form an RING-type zinc finger; sequence CKICLGAEKTVCFVPCGHVVACGKCAAGVTTCPVCR.

This sequence belongs to the IAP family. In terms of processing, auto-ubiquitinated.

It catalyses the reaction S-ubiquitinyl-[E2 ubiquitin-conjugating enzyme]-L-cysteine + [acceptor protein]-L-lysine = [E2 ubiquitin-conjugating enzyme]-L-cysteine + N(6)-ubiquitinyl-[acceptor protein]-L-lysine.. Functionally, RING-finger E3 ubiquitin ligase required to prevent cellular apoptosis in infected cells. Ubiquitinates and subsequently targets host pro-apoptotic cellular proteins such as HID for degradation by the proteasome. This is E3 ubiquitin-protein ligase IAP-3 (IAP3) from Orgyia pseudotsugata multicapsid polyhedrosis virus (OpMNPV).